We begin with the raw amino-acid sequence, 194 residues long: Fe/S biogenesis protein NfuA (194 aa).

The [4Fe-4S] cluster site is built by Cys-152 and Cys-155.

It belongs to the NfuA family. As to quaternary structure, homodimer. It depends on [4Fe-4S] cluster as a cofactor.

Involved in iron-sulfur cluster biogenesis. Binds a 4Fe-4S cluster, can transfer this cluster to apoproteins, and thereby intervenes in the maturation of Fe/S proteins. Could also act as a scaffold/chaperone for damaged Fe/S proteins. The polypeptide is Fe/S biogenesis protein NfuA (Pseudomonas entomophila (strain L48)).